Here is a 113-residue protein sequence, read N- to C-terminus: Small ribosomal subunit protein uS14m (113 aa).

Belongs to the universal ribosomal protein uS14 family. Component of the mitochondrial small ribosomal subunit (mt-SSU). Mature N.crassa 74S mitochondrial ribosomes consist of a small (37S) and a large (54S) subunit. The 37S small subunit contains a 16S ribosomal RNA (16S mt-rRNA) and 32 different proteins. The 54S large subunit contains a 23S rRNA (23S mt-rRNA) and 42 different proteins.

It localises to the mitochondrion. Its function is as follows. Component of the mitochondrial ribosome (mitoribosome), a dedicated translation machinery responsible for the synthesis of mitochondrial genome-encoded proteins, including at least some of the essential transmembrane subunits of the mitochondrial respiratory chain. The mitoribosomes are attached to the mitochondrial inner membrane and translation products are cotranslationally integrated into the membrane. The sequence is that of Small ribosomal subunit protein uS14m (mrp2) from Neurospora crassa (strain ATCC 24698 / 74-OR23-1A / CBS 708.71 / DSM 1257 / FGSC 987).